A 210-amino-acid chain; its full sequence is Glutathione S-transferase P (210 aa).

One can recognise a GST N-terminal domain in the interval 2–81 (PPYTIVYFPV…HLGRTLGLYG (80 aa)). Phosphotyrosine; by EGFR is present on Y4. Glutathione contacts are provided by residues Y8, R14, W39, K45, and 52–53 (QL). Phosphothreonine is present on T62. Position 65–66 (65–66 (QS)) interacts with glutathione. In terms of domain architecture, GST C-terminal spans 83 to 204 (DQQEAALVDM…ASPEHMNRPI (122 aa)). 2 positions are modified to N6-succinyllysine: K103 and K116. An N6-acetyllysine modification is found at K128.

Belongs to the GST superfamily. Pi family. Homodimer. Interacts with CDK5.

The protein resides in the cytoplasm. Its subcellular location is the mitochondrion. It localises to the nucleus. It carries out the reaction RX + glutathione = an S-substituted glutathione + a halide anion + H(+). It catalyses the reaction prostaglandin J2 + glutathione = prostaglandin J2-S-(R)-glutathione. The catalysed reaction is prostaglandin J2 + glutathione = prostaglandin J2-S-(S)-glutathione. The enzyme catalyses prostaglandin A2 + glutathione = prostaglandin A2-S-(S)-glutathione. It carries out the reaction 11(S)-hydroxy-14(S),15(S)-epoxy-(5Z,8Z,12E)-eicosatrienoate + glutathione = (11S,15S)-dihydroxy-14(R)-S-glutathionyl-(5Z,8Z,12E)-eicosatrienoate. Conjugation of reduced glutathione to a wide number of exogenous and endogenous hydrophobic electrophiles. Involved in the formation of glutathione conjugates of both prostaglandin A2 (PGA2) and prostaglandin J2 (PGJ2). Participates in the formation of novel hepoxilin regioisomers. Negatively regulates CDK5 activity via p25/p35 translocation to prevent neurodegeneration. In Bos taurus (Bovine), this protein is Glutathione S-transferase P (GSTP1).